The sequence spans 78 residues: UPF0270 protein PC1_3850 (78 aa).

Belongs to the UPF0270 family.

This is UPF0270 protein PC1_3850 from Pectobacterium carotovorum subsp. carotovorum (strain PC1).